The sequence spans 388 residues: Succinate--CoA ligase [ADP-forming] subunit beta (388 aa).

The ATP-grasp domain occupies 9–244 (KEILRQAGVP…LDEEDPAEVE (236 aa)). ATP-binding positions include Lys-46, 53 to 55 (GRG), Glu-99, Ala-102, and Glu-107. The Mg(2+) site is built by Asn-199 and Asp-213. Residues Asn-264 and 321 to 323 (GIM) each bind substrate.

Belongs to the succinate/malate CoA ligase beta subunit family. Heterotetramer of two alpha and two beta subunits. Mg(2+) is required as a cofactor.

It catalyses the reaction succinate + ATP + CoA = succinyl-CoA + ADP + phosphate. The enzyme catalyses GTP + succinate + CoA = succinyl-CoA + GDP + phosphate. It functions in the pathway carbohydrate metabolism; tricarboxylic acid cycle; succinate from succinyl-CoA (ligase route): step 1/1. In terms of biological role, succinyl-CoA synthetase functions in the citric acid cycle (TCA), coupling the hydrolysis of succinyl-CoA to the synthesis of either ATP or GTP and thus represents the only step of substrate-level phosphorylation in the TCA. The beta subunit provides nucleotide specificity of the enzyme and binds the substrate succinate, while the binding sites for coenzyme A and phosphate are found in the alpha subunit. The chain is Succinate--CoA ligase [ADP-forming] subunit beta from Albidiferax ferrireducens (strain ATCC BAA-621 / DSM 15236 / T118) (Rhodoferax ferrireducens).